The following is a 189-amino-acid chain: Small ribosomal subunit protein uS5 (189 aa).

An S5 DRBM domain is found at 22 to 85 (FVDKLVAINR…EAAKRDLIFV (64 aa)).

This sequence belongs to the universal ribosomal protein uS5 family. As to quaternary structure, part of the 30S ribosomal subunit. Contacts proteins S4 and S8.

In terms of biological role, with S4 and S12 plays an important role in translational accuracy. Functionally, located at the back of the 30S subunit body where it stabilizes the conformation of the head with respect to the body. In Sinorhizobium medicae (strain WSM419) (Ensifer medicae), this protein is Small ribosomal subunit protein uS5.